Here is a 179-residue protein sequence, read N- to C-terminus: Adenine phosphoribosyltransferase (179 aa).

It belongs to the purine/pyrimidine phosphoribosyltransferase family. In terms of assembly, homodimer.

It is found in the cytoplasm. The catalysed reaction is AMP + diphosphate = 5-phospho-alpha-D-ribose 1-diphosphate + adenine. It participates in purine metabolism; AMP biosynthesis via salvage pathway; AMP from adenine: step 1/1. In terms of biological role, catalyzes a salvage reaction resulting in the formation of AMP, that is energically less costly than de novo synthesis. The chain is Adenine phosphoribosyltransferase from Mycolicibacterium gilvum (strain PYR-GCK) (Mycobacterium gilvum (strain PYR-GCK)).